Consider the following 167-residue polypeptide: Lipoprotein signal peptidase (167 aa).

The next 3 helical transmembrane spans lie at 10-30 (LIWL…KAWV), 68-88 (WQMW…TFWL), and 98-118 (SALP…DRFL). Active-site residues include Asp-124 and Asp-142. A helical transmembrane segment spans residues 138–158 (FNLADSAIVAGAIGIGLLSLF).

It belongs to the peptidase A8 family.

The protein localises to the cell inner membrane. The enzyme catalyses Release of signal peptides from bacterial membrane prolipoproteins. Hydrolyzes -Xaa-Yaa-Zaa-|-(S,diacylglyceryl)Cys-, in which Xaa is hydrophobic (preferably Leu), and Yaa (Ala or Ser) and Zaa (Gly or Ala) have small, neutral side chains.. Its pathway is protein modification; lipoprotein biosynthesis (signal peptide cleavage). Its function is as follows. This protein specifically catalyzes the removal of signal peptides from prolipoproteins. This chain is Lipoprotein signal peptidase, found in Xylella fastidiosa (strain M23).